Here is a 363-residue protein sequence, read N- to C-terminus: S-adenosylmethionine:tRNA ribosyltransferase-isomerase (363 aa).

The protein belongs to the QueA family. As to quaternary structure, monomer.

It localises to the cytoplasm. The catalysed reaction is 7-aminomethyl-7-carbaguanosine(34) in tRNA + S-adenosyl-L-methionine = epoxyqueuosine(34) in tRNA + adenine + L-methionine + 2 H(+). It participates in tRNA modification; tRNA-queuosine biosynthesis. Its function is as follows. Transfers and isomerizes the ribose moiety from AdoMet to the 7-aminomethyl group of 7-deazaguanine (preQ1-tRNA) to give epoxyqueuosine (oQ-tRNA). The chain is S-adenosylmethionine:tRNA ribosyltransferase-isomerase from Haemophilus influenzae (strain PittGG).